Consider the following 186-residue polypeptide: Ribonuclease M5 (186 aa).

The 91-residue stretch at 4-94 (KEIIVVEGRD…AKPKNKRGIG (91 aa)) folds into the Toprim domain. Positions 10, 56, and 58 each coordinate Mg(2+).

Belongs to the ribonuclease M5 family. In terms of assembly, requires ribosomal protein L18 (rplR) for catalysis; it can be replaced by 30% dimethylsulfoxide suggesting L18 functions as an rRNA folding chaperone. Mg(2+) is required as a cofactor. Requires Mn(2+) as cofactor. Ca(2+) serves as cofactor.

It localises to the cytoplasm. The catalysed reaction is Endonucleolytic cleavage of RNA, removing 21 and 42 nucleotides, respectively, from the 5'- and 3'-termini of a 5S-rRNA precursor.. In terms of biological role, required for correct processing of both the 5' and 3' ends of 5S rRNA precursor. Cleaves both sides of a double-stranded region yielding mature 5S rRNA in one step. Releases 5'-phosphoryl and 3'-hydroxy termini. This chain is Ribonuclease M5, found in Bacillus subtilis (strain 168).